Consider the following 80-residue polypeptide: Exodeoxyribonuclease 7 small subunit (80 aa).

This sequence belongs to the XseB family. As to quaternary structure, heterooligomer composed of large and small subunits.

Its subcellular location is the cytoplasm. It catalyses the reaction Exonucleolytic cleavage in either 5'- to 3'- or 3'- to 5'-direction to yield nucleoside 5'-phosphates.. Its function is as follows. Bidirectionally degrades single-stranded DNA into large acid-insoluble oligonucleotides, which are then degraded further into small acid-soluble oligonucleotides. In Marinomonas sp. (strain MWYL1), this protein is Exodeoxyribonuclease 7 small subunit.